A 1047-amino-acid chain; its full sequence is Error-prone DNA polymerase (1047 aa).

This sequence belongs to the DNA polymerase type-C family. DnaE2 subfamily.

Its subcellular location is the cytoplasm. It carries out the reaction DNA(n) + a 2'-deoxyribonucleoside 5'-triphosphate = DNA(n+1) + diphosphate. DNA polymerase involved in damage-induced mutagenesis and translesion synthesis (TLS). It is not the major replicative DNA polymerase. The protein is Error-prone DNA polymerase of Methylococcus capsulatus (strain ATCC 33009 / NCIMB 11132 / Bath).